We begin with the raw amino-acid sequence, 243 residues long: tRNA (guanine-N(1)-)-methyltransferase (243 aa).

Residues Gly-108 and 127 to 132 each bind S-adenosyl-L-methionine; that span reads LGDFVL.

The protein belongs to the RNA methyltransferase TrmD family. As to quaternary structure, homodimer.

The protein localises to the cytoplasm. The catalysed reaction is guanosine(37) in tRNA + S-adenosyl-L-methionine = N(1)-methylguanosine(37) in tRNA + S-adenosyl-L-homocysteine + H(+). Specifically methylates guanosine-37 in various tRNAs. The protein is tRNA (guanine-N(1)-)-methyltransferase of Streptococcus equi subsp. zooepidemicus (strain MGCS10565).